An 88-amino-acid chain; its full sequence is Small ribosomal subunit protein uS17 (88 aa).

Belongs to the universal ribosomal protein uS17 family. In terms of assembly, part of the 30S ribosomal subunit.

In terms of biological role, one of the primary rRNA binding proteins, it binds specifically to the 5'-end of 16S ribosomal RNA. This Ruthia magnifica subsp. Calyptogena magnifica protein is Small ribosomal subunit protein uS17.